The sequence spans 345 residues: MSILNSGSCMMTDTNQNMECKVDFKKGEFDLQPLQINQFGFTKTQLHKPLTRNLSNKEDTHVPKRQKVSEPYFRGETERNVKSHQDRAASIYHEAMNGASGIHKQMSLPEYSPQMGNSWEIQVPMTTRHSISETPTKPFTATTAIAGSAGSLPRNTTIGLPGPSALLKHESGKNENQVRVCLYHKHYSRWYLPFDKDDDNQLVEAYAKYFSSENRPSIFYVLQGISFGPECEYVLRRKHWWNPWAEKVMRREIVERKIDTHPGCRTVAERYEQIEASGSEELLIIPIYKINMWVLSLLLFSAGGSVLIGLWMRLSDPSFAHGMLLNLGIGSIGSFLYLLSNTWCR.

The next 2 membrane-spanning stretches (helical) occupy residues 292-312 (MWVLSLLLFSAGGSVLIGLWM) and 319-329 (FAHGMLLNLGI).

It is found in the membrane. Functionally, required for correct meiotic chromosome segregation. Appears to also have role in sporulation. This Schizosaccharomyces pombe (strain 972 / ATCC 24843) (Fission yeast) protein is Meiotically up-regulated gene 97 protein (mug97).